We begin with the raw amino-acid sequence, 567 residues long: Interleukin-1 receptor-like 1 (567 aa).

The signal sequence occupies residues 1-26 (MIDRQRMGLWALAILTLPMYLTVTEG). 2 consecutive Ig-like C2-type domains span residues 27-109 (SKSS…LNVT) and 120-203 (PDYL…VTAT). Residues 27-332 (SKSSWGLENE…LRRKQPIDHR (306 aa)) lie on the Extracellular side of the membrane. An intrachain disulfide couples Cys-42 to Cys-93. N-linked (GlcNAc...) asparagine glycans are attached at residues Asn-60, Asn-101, Asn-107, Asn-146, Asn-176, and Asn-194. Cystine bridges form between Cys-117/Cys-157 and Cys-139/Cys-187. The flexible linker stretch occupies residues 204–216 (RSFTVEEKGFSMF). The Ig-like C2-type 3 domain occupies 217-324 (PVITNPPYNH…GMIRHTIRLR (108 aa)). N-linked (GlcNAc...) asparagine glycosylation is found at Asn-225, Asn-259, and Asn-278. 2 disulfides stabilise this stretch: Cys-240-Cys-308 and Cys-243-Cys-287. Residue Lys-326 forms a Glycyl lysine isopeptide (Lys-Gly) (interchain with G-Cter in ubiquitin) linkage. The chain crosses the membrane as a helical span at residues 333–355 (SIYYIVAGCSLLLMFINVLVIVL). Topologically, residues 356–567 (KVFWIEVALF…GKACLDLKHF (212 aa)) are cytoplasmic. One can recognise a TIR domain in the interval 380–540 (KLYDAYIIYP…KFWKHVRYQM (161 aa)). Residue Ser-442 is modified to Phosphoserine; by GSK3-beta. The active site involves Glu-466.

Belongs to the interleukin-1 receptor family. As to quaternary structure, interacts with MYD88, IRAK1, IRAK4, and TRAF6. Bound to its ligand IL33, interacts with IL1RAP to form the minimal interleukin-33 signaling complex with a 1:1:1 stoichiometry. Interacts with KIT (bound to KITLG/SCF). A mast cell-specific KITLG/SCF-induced interleukin-33 signaling complex contains IL1RL1, IL1RAP, KIT and MYD88. Interacts with TMED1. In terms of processing, phosphorylated by GSK3B at Ser-442; leading to proteasomal degradation. Ubiquitinated at Lys-326 in a FBXL19-mediated manner; leading to proteasomal degradation. Ubiquitination by TRAF6 via 'Lys-27'-linked polyubiquitination and deubiquitination by USP38 serves as a critical regulatory mechanism for fine-tuning IL1RL1-mediated inflammatory response. Predominantly expressed in hematopoietic tissues, and in macrophage, erythroid, epithelial and fibroblast cell lines. Isoform A is expressed in brain astrocytes and microglia. Isoform B is expressed in brain endothelial cells.

It localises to the cell membrane. The protein resides in the secreted. The catalysed reaction is NAD(+) + H2O = ADP-D-ribose + nicotinamide + H(+). Functionally, receptor for interleukin-33 (IL-33) which plays crucial roles in innate and adaptive immunity, contributing to tissue homeostasis and responses to environmental stresses together with coreceptor IL1RAP. Its stimulation recruits MYD88, IRAK1, IRAK4, and TRAF6, followed by phosphorylation of MAPK3/ERK1 and/or MAPK1/ERK2, MAPK14, and MAPK8. Possibly involved in helper T-cell function. Upon tissue injury, induces UCP2-dependent mitochondrial rewiring that attenuates the generation of reactive oxygen species and preserves the integrity of Krebs cycle required for persistent production of itaconate and subsequent GATA3-dependent differentiation of inflammation-resolving alternatively activated macrophages. Inhibits IL-33 signaling. This Mus musculus (Mouse) protein is Interleukin-1 receptor-like 1 (Il1rl1).